Consider the following 481-residue polypeptide: tRNA-guanine(15) transglycosylase (481 aa).

The active-site Nucleophile is the aspartate 87. Substrate is bound by residues aspartate 122 and alanine 191. Zn(2+) contacts are provided by cysteine 273, cysteine 275, and cysteine 278.

It belongs to the archaeosine tRNA-ribosyltransferase family. Zn(2+) serves as cofactor.

The enzyme catalyses guanosine(15) in tRNA + 7-cyano-7-deazaguanine = 7-cyano-7-carbaguanosine(15) in tRNA + guanine. It participates in tRNA modification; archaeosine-tRNA biosynthesis. Its function is as follows. Exchanges the guanine residue with 7-cyano-7-deazaguanine (preQ0) at position 15 in the dihydrouridine loop (D-loop) of archaeal tRNAs. This is tRNA-guanine(15) transglycosylase from Archaeoglobus fulgidus (strain ATCC 49558 / DSM 4304 / JCM 9628 / NBRC 100126 / VC-16).